Consider the following 562-residue polypeptide: MTITFLILLFTVVKGDQICIGYHANNSTEKVDTILERNVTVTHAKDILEKTHNGKLCRLSGIPPLELGDCSIAGWLLGNPECDRLLSVPEWSYIVEKENPANGLCYPGNFNDYEELKHLLTRVTHFEKIKILPRDQWTQHTTTGGSRACAVSGNPSFFRNMVWLTKKGSNYPVAKGSYNNTSGEQMLVIWGIHHPNDDTEQRTLYQNVGTYVSVGTSTLNKRSIPEIATRPKVNGQGGRMEFSWTLLETWDVINFESTGNLIAPEYGFKISKRGSSGIMKTEKTLENCETKCQTPLGAINTTLPFHNIHPLTIGECPKYVKSDRLVLATGLRNVPQIESRGLFGAIAGFIEGGWQGMIDGWYGYHHSNDQGSGYAADKESTQKAIDGITNKVNSVIEKMNTQFEAVGKEFNNLERRLENLNKKMEDGFLDVWTYNAELLVLMENERTLDFHDSNVKNLYDKVRMQLRDNAKEIGNGCFEFYHKCDDECMNSVRNGTYDYPKYEEESKLNRNEIKGVKLSNMGVYQILAIYATVAGSLSLAIMIAGISFWMCSNGSLQCRICI.

An N-terminal signal peptide occupies residues 1–15; it reads MTITFLILLFTVVKG. Over 16-525 the chain is Extracellular; it reads DQICIGYHAN…VKLSNMGVYQ (510 aa). Disulfide bonds link C19–C477, C57–C288, C70–C82, C105–C149, C292–C316, and C484–C488. N-linked (GlcNAc...) asparagine; by host glycosylation is found at N25, N26, and N38. Residues N179, N180, and N300 are each glycosylated (N-linked (GlcNAc...) asparagine; by host). N494 is a glycosylation site (N-linked (GlcNAc...) asparagine; by host). A helical transmembrane segment spans residues 526–546; that stretch reads ILAIYATVAGSLSLAIMIAGI. Over 547–562 the chain is Cytoplasmic; sequence SFWMCSNGSLQCRICI. 3 S-palmitoyl cysteine; by host lipidation sites follow: C551, C558, and C561.

This sequence belongs to the influenza viruses hemagglutinin family. Homotrimer of disulfide-linked HA1-HA2. Palmitoylated. Post-translationally, in natural infection, inactive HA is matured into HA1 and HA2 outside the cell by one or more trypsin-like, arginine-specific endoprotease secreted by the bronchial epithelial cells. One identified protease that may be involved in this process is secreted in lungs by club cells.

The protein resides in the virion membrane. Its subcellular location is the host apical cell membrane. Binds to sialic acid-containing receptors on the cell surface, bringing about the attachment of the virus particle to the cell. This attachment induces virion internalization either through clathrin-dependent endocytosis or through clathrin- and caveolin-independent pathway. Plays a major role in the determination of host range restriction and virulence. Class I viral fusion protein. Responsible for penetration of the virus into the cell cytoplasm by mediating the fusion of the membrane of the endocytosed virus particle with the endosomal membrane. Low pH in endosomes induces an irreversible conformational change in HA2, releasing the fusion hydrophobic peptide. Several trimers are required to form a competent fusion pore. The protein is Hemagglutinin of Influenza A virus (strain A/Mallard/New York/6750/1978 H2N2).